The following is an 899-amino-acid chain: MTDKSIKELALSVGRPVEKLLEQAREAGLPQRTADDIITTEQQDTLVNYLKKVHGQESGNTGKIALKRKTTSTAKVASTSGKAKTINVEVRKKQVFAKPNPEQIAAEAKARAEAEAKARAEQQAREAAEQKARLQTEQKAKATLDAMRAAHQQDSAAQSAPKAAVVVKKRGGGTVKPAPKPAETLEQKKAREAQTAQLKATEEAARRKAAEEAQQRTLEQMRKMASKYSNDDATATIRVIDDSPLASGLVGQAYEDSFNQEDREIKRGGATTNPRAGKKGGRRGQEEQSFVNHNKRGLKSSQANKHGFEKPVKKQVYDVEIGSSIVVADLAQKMAIKVREVIKTLMKMGELVNQNQTIDQDTAALVVEEMGHNPVLVSDTQAEDNLLEAAEEARGEQTTRPPVVTIMGHVDHGKTSLLDRIRRSKVAAGEAGGITQHIGAYHVETDKGIITFLDTPGHAAFTSMRARGAKATDIVVLVVAADDGVMPQTAEAIDHARAAGTPIIVAINKMDKESADPDRVLNELTTKEIVPEEWGGDVPVAKVSAHTGQGIDELLDLILIQSELMELKASAEGAAQGVVIEARVDKGRGAVTSILVQNGTLNIGDLVLAGSSYGRVRAMSDENGKPIKSAGPSIPVEILGLPEAPMAGDEVLVVNDEKKAREVADARADREREKRIERQSAMRLENIMASMGKKDVPTVNVVLRTDVRGTLEALNAALHELSTDEVKVRVISSGVGAITESDVILAESSEAVLLGFNVRADTAARQKSDQDGIDIRYYSIIYELIDDVKDAMSGKLAPEHRETILGVAQVREVFRSSKFGAAAGCMVMEGVIHRNKPIRVLRDDVVIFQGELESLRRYKDVVDEVRAGMECGLAVKGYNDIKPLDKIEVYDVQMVKRSL.

3 disordered regions span residues 116–135, 170–189, and 262–306; these read AKAR…ARLQ, RGGG…EQKK, and DREI…ANKH. Residues 399 to 568 enclose the tr-type G domain; sequence TRPPVVTIMG…LIQSELMELK (170 aa). The segment at 408 to 415 is G1; sequence GHVDHGKT. 408-415 contacts GTP; the sequence is GHVDHGKT. Residues 433 to 437 are G2; sequence GITQH. A G3 region spans residues 454 to 457; the sequence is DTPG. GTP-binding positions include 454–458 and 508–511; these read DTPGH and NKMD. Residues 508 to 511 form a G4 region; it reads NKMD. The G5 stretch occupies residues 544–546; the sequence is SAH.

The protein belongs to the TRAFAC class translation factor GTPase superfamily. Classic translation factor GTPase family. IF-2 subfamily.

It localises to the cytoplasm. One of the essential components for the initiation of protein synthesis. Protects formylmethionyl-tRNA from spontaneous hydrolysis and promotes its binding to the 30S ribosomal subunits. Also involved in the hydrolysis of GTP during the formation of the 70S ribosomal complex. The sequence is that of Translation initiation factor IF-2 from Acinetobacter baumannii (strain AB307-0294).